A 420-amino-acid chain; its full sequence is Glucose-1-phosphate adenylyltransferase (420 aa).

Residues Y107, G173, 188–189 (EK), and S206 contribute to the alpha-D-glucose 1-phosphate site.

The protein belongs to the bacterial/plant glucose-1-phosphate adenylyltransferase family. In terms of assembly, homotetramer.

The catalysed reaction is alpha-D-glucose 1-phosphate + ATP + H(+) = ADP-alpha-D-glucose + diphosphate. It functions in the pathway glycan biosynthesis; glycogen biosynthesis. Its function is as follows. Involved in the biosynthesis of ADP-glucose, a building block required for the elongation reactions to produce glycogen. Catalyzes the reaction between ATP and alpha-D-glucose 1-phosphate (G1P) to produce pyrophosphate and ADP-Glc. The sequence is that of Glucose-1-phosphate adenylyltransferase from Shewanella baltica (strain OS185).